Reading from the N-terminus, the 172-residue chain is Small ribosomal subunit protein uS5 (172 aa).

The 64-residue stretch at 17 to 80 (LREKMIAVNR…EEARRNMVKV (64 aa)) folds into the S5 DRBM domain.

Belongs to the universal ribosomal protein uS5 family. In terms of assembly, part of the 30S ribosomal subunit. Contacts proteins S4 and S8.

Its function is as follows. With S4 and S12 plays an important role in translational accuracy. In terms of biological role, located at the back of the 30S subunit body where it stabilizes the conformation of the head with respect to the body. This Verminephrobacter eiseniae (strain EF01-2) protein is Small ribosomal subunit protein uS5.